We begin with the raw amino-acid sequence, 462 residues long: Glutamate--tRNA ligase 1 (462 aa).

The 'HIGH' region signature appears at 8-18; the sequence is PSPTGYLHIGG. The 'KMSKS' region signature appears at 237-241; that stretch reads KLSKR. Position 240 (Lys240) interacts with ATP.

This sequence belongs to the class-I aminoacyl-tRNA synthetase family. Glutamate--tRNA ligase type 1 subfamily. In terms of assembly, monomer.

Its subcellular location is the cytoplasm. It catalyses the reaction tRNA(Glu) + L-glutamate + ATP = L-glutamyl-tRNA(Glu) + AMP + diphosphate. In terms of biological role, catalyzes the attachment of glutamate to tRNA(Glu) in a two-step reaction: glutamate is first activated by ATP to form Glu-AMP and then transferred to the acceptor end of tRNA(Glu). The chain is Glutamate--tRNA ligase 1 from Campylobacter hominis (strain ATCC BAA-381 / DSM 21671 / CCUG 45161 / LMG 19568 / NCTC 13146 / CH001A).